A 158-amino-acid polypeptide reads, in one-letter code: UPF0178 protein Rpal_2485 (158 aa).

This sequence belongs to the UPF0178 family.

This Rhodopseudomonas palustris (strain TIE-1) protein is UPF0178 protein Rpal_2485.